The chain runs to 1019 residues: Serine/threonine-protein kinase 31 (1019 aa).

The Tudor domain maps to 78–137 (NLDPNKIYGGLFSEDQCWYRCKVLKIISVEKCLVRYIDYGNTEILNRSDIVEIPLELQFS). Residues 298–355 (EKIKQDQKLIEENEKLKTEKDALLESYKALELKVEQIAQELQQEKAAAVDLTNHLEYT) adopt a coiled-coil conformation. Positions 710–1019 (IGLLKYMNSG…TRNGEANFDC (310 aa)) constitute a Protein kinase domain. ATP-binding positions include 716 to 724 (MNSGGLLTM) and Lys737.

This sequence belongs to the protein kinase superfamily. Ser/Thr protein kinase family. Testis specific.

It carries out the reaction L-seryl-[protein] + ATP = O-phospho-L-seryl-[protein] + ADP + H(+). It catalyses the reaction L-threonyl-[protein] + ATP = O-phospho-L-threonyl-[protein] + ADP + H(+). The polypeptide is Serine/threonine-protein kinase 31 (STK31) (Homo sapiens (Human)).